The primary structure comprises 506 residues: Anaerobic nitric oxide reductase transcription regulator NorR (506 aa).

A 4-aspartylphosphate modification is found at D57. A Sigma-54 factor interaction domain is found at M187–V416. Residues G215–E222 and A278–E287 each bind ATP. The segment at residues W481 to K500 is a DNA-binding region (H-T-H motif).

It functions in the pathway nitrogen metabolism; nitric oxide reduction. Required for the expression of anaerobic nitric oxide (NO) reductase, acts as a transcriptional activator for at least the norVW operon. Activation also requires sigma-54. The polypeptide is Anaerobic nitric oxide reductase transcription regulator NorR (Salmonella paratyphi C (strain RKS4594)).